We begin with the raw amino-acid sequence, 393 residues long: Putative cytochrome P450 143 (393 aa).

C342 contacts heme.

It belongs to the cytochrome P450 family. Heme serves as cofactor.

This Mycobacterium bovis (strain ATCC BAA-935 / AF2122/97) protein is Putative cytochrome P450 143 (cyp143).